The following is a 470-amino-acid chain: Sorting nexin-17 (470 aa).

The 109-residue stretch at 1 to 109 (MHFSIPETES…SFLRRAQQET (109 aa)) folds into the PX domain. The a 1,2-diacyl-sn-glycero-3-phospho-(1D-myo-inositol-3-phosphate) site is built by arginine 36, serine 38, lysine 62, and arginine 75. Positions 115–206 (EEVSLEVLLS…YKIVLRKSYW (92 aa)) constitute a Ras-associating domain. An FERM-like region spans residues 115 to 432 (EEVSLEVLLS…DASRESMVKL (318 aa)). The segment at 270-432 (GYLRFDACVA…DASRESMVKL (163 aa)) is PTB-like F3 module. Serine 336, serine 407, serine 409, serine 415, serine 421, serine 437, and serine 440 each carry phosphoserine. Positions 401–426 (GGTLRRSDSQQAVKSPPLLESPDASR) are disordered.

It belongs to the sorting nexin family. Monomer. Interacts with APP (via cytoplasmic YXNPXY motif). Interacts with KIF1B. Interacts with the C-termini of P-selectin, PTC, LDLR, VLDLR, LRP1 and LRP8. Interacts with KRIT1 (via N-terminus). Interacts with HRAS. Interacts with ITGB1 and ITGB5 (via NPxY motif). Interacts with CCDC22 and CCDC93; the interaction associates SNX17 with the CCC complex. Interacts (via C-terminus) with VPS26C and VPS35L; the interactions are direct and associate SNX17 with the retriever complex. Detected in brain neurons (at protein level). Broadly expressed, with highest levels in brain and placenta, and lowest levels in colon, intestine and liver.

The protein resides in the cytoplasm. It is found in the early endosome. It localises to the cytoplasmic vesicle membrane. In terms of biological role, critical regulator of endosomal recycling of numerous surface proteins, including integrins, signaling receptor and channels. Binds to NPxY sequences in the cytoplasmic tails of target cargos. Associates with retriever and CCC complexes to prevent lysosomal degradation and promote cell surface recycling of numerous cargos such as integrins ITGB1, ITGB5 and their associated alpha subunits. Also required for maintenance of normal cell surface levels of APP and LRP1. Interacts with membranes containing phosphatidylinositol 3-phosphate (PtdIns(3P)). This chain is Sorting nexin-17 (Snx17), found in Mus musculus (Mouse).